We begin with the raw amino-acid sequence, 199 residues long: Prolactin (199 aa).

An intrachain disulfide couples C4 to C11. A Phosphoserine modification is found at S26. An N-linked (GlcNAc...) asparagine; partial glycan is attached at N31. Phosphoserine is present on residues S34 and S90. 2 disulfides stabilise this stretch: C58–C174 and C191–C199.

This sequence belongs to the somatotropin/prolactin family. As to quaternary structure, interacts with PRLR.

Its subcellular location is the secreted. Prolactin acts primarily on the mammary gland by promoting lactation. This is Prolactin (PRL) from Camelus dromedarius (Dromedary).